We begin with the raw amino-acid sequence, 266 residues long: 3-deoxy-manno-octulosonate cytidylyltransferase (266 aa).

The protein belongs to the KdsB family.

Its subcellular location is the cytoplasm. It catalyses the reaction 3-deoxy-alpha-D-manno-oct-2-ulosonate + CTP = CMP-3-deoxy-beta-D-manno-octulosonate + diphosphate. It participates in nucleotide-sugar biosynthesis; CMP-3-deoxy-D-manno-octulosonate biosynthesis; CMP-3-deoxy-D-manno-octulosonate from 3-deoxy-D-manno-octulosonate and CTP: step 1/1. Its pathway is bacterial outer membrane biogenesis; lipopolysaccharide biosynthesis. Its function is as follows. Activates KDO (a required 8-carbon sugar) for incorporation into bacterial lipopolysaccharide in Gram-negative bacteria. This Paraburkholderia xenovorans (strain LB400) protein is 3-deoxy-manno-octulosonate cytidylyltransferase.